The chain runs to 1021 residues: Peroxisomal ATPase PEX6 (1021 aa).

763-770 contacts ATP; sequence GPPGTGKT.

It belongs to the AAA ATPase family. In terms of assembly, interacts with PEX1; forming the PEX1-PEX6 AAA ATPase complex, which is composed of a heterohexamer formed by a trimer of PEX1-PEX6 dimers.

It is found in the cytoplasm. It localises to the cytosol. The protein resides in the peroxisome membrane. It carries out the reaction ATP + H2O = ADP + phosphate + H(+). Functionally, component of the PEX1-PEX6 AAA ATPase complex, a protein dislocase complex that mediates the ATP-dependent extraction of the PEX5 receptor from peroxisomal membranes, an essential step for PEX5 recycling. Specifically recognizes PEX5 monoubiquitinated at 'Cys-6', and pulls it out of the peroxisome lumen through the PEX2-PEX10-PEX12 retrotranslocation channel. Extraction by the PEX1-PEX6 AAA ATPase complex is accompanied by unfolding of the TPR repeats and release of bound cargo from PEX5. The polypeptide is Peroxisomal ATPase PEX6 (PEX6) (Eremothecium gossypii (strain ATCC 10895 / CBS 109.51 / FGSC 9923 / NRRL Y-1056) (Yeast)).